A 183-amino-acid chain; its full sequence is Translation initiation factor IF-3 (183 aa).

The protein belongs to the IF-3 family. In terms of assembly, monomer.

The protein resides in the cytoplasm. Functionally, IF-3 binds to the 30S ribosomal subunit and shifts the equilibrium between 70S ribosomes and their 50S and 30S subunits in favor of the free subunits, thus enhancing the availability of 30S subunits on which protein synthesis initiation begins. The sequence is that of Translation initiation factor IF-3 from Azobacteroides pseudotrichonymphae genomovar. CFP2.